The chain runs to 368 residues: 3-dehydroquinate synthase (368 aa).

Residues 131–132 (TT), K144, and K153 each bind NAD(+). Zn(2+)-binding residues include E186, H249, and H267.

It belongs to the sugar phosphate cyclases superfamily. Dehydroquinate synthase family. Requires Co(2+) as cofactor. The cofactor is Zn(2+). NAD(+) is required as a cofactor.

The protein resides in the cytoplasm. It carries out the reaction 7-phospho-2-dehydro-3-deoxy-D-arabino-heptonate = 3-dehydroquinate + phosphate. It participates in metabolic intermediate biosynthesis; chorismate biosynthesis; chorismate from D-erythrose 4-phosphate and phosphoenolpyruvate: step 2/7. In terms of biological role, catalyzes the conversion of 3-deoxy-D-arabino-heptulosonate 7-phosphate (DAHP) to dehydroquinate (DHQ). The protein is 3-dehydroquinate synthase of Pelagibacter ubique (strain HTCC1062).